The primary structure comprises 372 residues: MEILMTVSKFASFCTMGANASALEKEIGSEQFPVNEHYFGLVNFGNTCYCNSVLQALYFCRPFREKILAYRSQPRRKENLLTCLADLFHSIANQKRKVGVIPPKKFITRLRKENELFDNYMQQDAHEFLNYLLNTIADLLQEERKQDKTNGRLANGSLDSQNHNSNAPPPSTWVHEIFQGTLTNETRCLTCETISSKDEDFLDLSVDVEQNTSITHCLRGFSNTETLCSEYKYYCEECRSKQEAHKRMRVKKLPMILALHLKRFKYMEQLQRYTKLSYRVVFPLELRLFNTSGDATNPERLYDLVAVVVHCGSGPNRGHYIAIVKSHDFWLLFDDDIVEKIDAQAIEEFYGLTSEISKNSESGYILFYQSRD.

In terms of domain architecture, USP spans 39–371; that stretch reads FGLVNFGNTC…SGYILFYQSR (333 aa). Cysteine 48 acts as the Nucleophile in catalysis. Residues 150–169 form a disordered region; the sequence is NGRLANGSLDSQNHNSNAPP. The segment covering 157–166 has biased composition (polar residues); the sequence is SLDSQNHNSN. Cysteine 188, cysteine 191, cysteine 235, and cysteine 238 together coordinate Zn(2+). The Proton acceptor role is filled by histidine 319.

It belongs to the peptidase C19 family. USP12/USP46 subfamily. As to quaternary structure, interacts with WDR48.

The catalysed reaction is Thiol-dependent hydrolysis of ester, thioester, amide, peptide and isopeptide bonds formed by the C-terminal Gly of ubiquitin (a 76-residue protein attached to proteins as an intracellular targeting signal).. Its function is as follows. Deubiquitinating enzyme. Has almost no deubiquitinating activity by itself and requires the interaction with wdr48 to have a high activity. This Salmo salar (Atlantic salmon) protein is Ubiquitin carboxyl-terminal hydrolase 12 (usp12).